A 475-amino-acid chain; its full sequence is MKMPLDIGVIHFIGIGGIGMSGIAEVFYNLGYKVQGSDQVESANVERLRRKGINVHIGHYAENLGNAEVVVFSTAVKKTNPEYIAAKERHLPLVRRAEMLAELMRFRRAIAVGGTHGKTTTTSMVAALLDAGHFDPVVINGGIINAYGTNSRTGEGDWMIVEADESDGTFLKLPADIAVVTNIDAEHLDHYGSFDAVRTAFRQFVENVPFYGFAVLCVDHPEVQSLAGRIDDRWVITYGANPQADVRFLNLSRDGQKTHFDVLVRSRKTGRKIELKNLLLPMAGQHNVANATAAIAIAHELGISNELIKKGLAEFGGVKRRFTRTGSWRGIEIFDDYGHHPVEIKAVLRAARESAKGRVIAIAQPHRYSRLYHLFDDFAACFNDADTVLITPVYAAGEEPIVGFGSQELVEHIKMAGHRDVRLIHDLEDVVSLVSKFAQAEDYVVFLGAGNITQWACALPHRLSGLDGYDKFSAH.

114–120 (GTHGKTT) contacts ATP.

Belongs to the MurCDEF family.

The protein localises to the cytoplasm. It carries out the reaction UDP-N-acetyl-alpha-D-muramate + L-alanine + ATP = UDP-N-acetyl-alpha-D-muramoyl-L-alanine + ADP + phosphate + H(+). It participates in cell wall biogenesis; peptidoglycan biosynthesis. Its function is as follows. Cell wall formation. The chain is UDP-N-acetylmuramate--L-alanine ligase from Bartonella tribocorum (strain CIP 105476 / IBS 506).